An 83-amino-acid chain; its full sequence is Large ribosomal subunit protein bL28 (83 aa).

It belongs to the bacterial ribosomal protein bL28 family.

This is Large ribosomal subunit protein bL28 from Amoebophilus asiaticus (strain 5a2).